The sequence spans 294 residues: tRNA dimethylallyltransferase (294 aa).

9–16 contributes to the ATP binding site; it reads GPTASGKS. Residue 11-16 participates in substrate binding; that stretch reads TASGKS. The interaction with substrate tRNA stretch occupies residues 155–159; it reads QRVIR.

This sequence belongs to the IPP transferase family. Monomer. The cofactor is Mg(2+).

It catalyses the reaction adenosine(37) in tRNA + dimethylallyl diphosphate = N(6)-dimethylallyladenosine(37) in tRNA + diphosphate. In terms of biological role, catalyzes the transfer of a dimethylallyl group onto the adenine at position 37 in tRNAs that read codons beginning with uridine, leading to the formation of N6-(dimethylallyl)adenosine (i(6)A). The polypeptide is tRNA dimethylallyltransferase (Leuconostoc citreum (strain KM20)).